The following is a 131-amino-acid chain: Small ribosomal subunit protein uS8 (131 aa).

This sequence belongs to the universal ribosomal protein uS8 family. Part of the 30S ribosomal subunit. Contacts proteins S5 and S12.

Its function is as follows. One of the primary rRNA binding proteins, it binds directly to 16S rRNA central domain where it helps coordinate assembly of the platform of the 30S subunit. This Chromobacterium violaceum (strain ATCC 12472 / DSM 30191 / JCM 1249 / CCUG 213 / NBRC 12614 / NCIMB 9131 / NCTC 9757 / MK) protein is Small ribosomal subunit protein uS8.